The chain runs to 414 residues: Eukaryotic initiation factor 4A-1 (414 aa).

Residues 41 to 69 (ESFDDMGLQENLLRGIYAYGFEKPSAIQQ) carry the Q motif motif. The Helicase ATP-binding domain occupies 72–242 (IVPFCKGLDV…RKFMNKPVRI (171 aa)). Residue 85-92 (AQSGTGKT) participates in ATP binding. Residues 190-193 (DEAD) carry the DEAD box motif. The Helicase C-terminal domain occupies 253–414 (GIKQFYVNVE…ELPANVADLL (162 aa)).

It belongs to the DEAD box helicase family. eIF4A subfamily. In terms of assembly, eIF4F is a multi-subunit complex, the composition of which varies with external and internal environmental conditions. It is composed of at least EIF4A, EIF4E and EIF4G.

It carries out the reaction ATP + H2O = ADP + phosphate + H(+). Its function is as follows. ATP-dependent RNA helicase which is a subunit of the eIF4F complex involved in cap recognition and is required for mRNA binding to ribosome. In the current model of translation initiation, eIF4A unwinds RNA secondary structures in the 5'-UTR of mRNAs which is necessary to allow efficient binding of the small ribosomal subunit, and subsequent scanning for the initiator codon. In Oryza sativa subsp. japonica (Rice), this protein is Eukaryotic initiation factor 4A-1.